Here is a 331-residue protein sequence, read N- to C-terminus: Probable deacetylase MTH_1194 (331 aa).

H118 (proton donor/acceptor) is an active-site residue. 3 residues coordinate Zn(2+): D155, H157, and D244.

The protein belongs to the histone deacetylase family. The cofactor is Zn(2+).

Its function is as follows. Probable deacetylase. The polypeptide is Probable deacetylase MTH_1194 (Methanothermobacter thermautotrophicus (strain ATCC 29096 / DSM 1053 / JCM 10044 / NBRC 100330 / Delta H) (Methanobacterium thermoautotrophicum)).